The primary structure comprises 96 residues: Exopolysaccharide production repressor protein (96 aa).

The next 2 helical transmembrane spans lie at phenylalanine 6–glycine 26 and threonine 35–tryptophan 55. Residues leucine 64–serine 96 are disordered.

The protein resides in the cell membrane. The protein operates within glycan metabolism; exopolysaccharide biosynthesis. Its function is as follows. Inhibition of exopolysaccharide synthesis (EPS) and nodulation ability (NOD). This Sinorhizobium fredii (strain NBRC 101917 / NGR234) protein is Exopolysaccharide production repressor protein (exoX).